The following is a 227-amino-acid chain: Thiocyanate methyltransferase 1 (227 aa).

Positions 36, 40, 47, and 74 each coordinate S-adenosyl-L-methionine. The residue at position 86 (S86) is a Phosphoserine. S-adenosyl-L-methionine is bound by residues D95, D123 to V124, and Y139.

This sequence belongs to the class I-like SAM-binding methyltransferase superfamily. TPMT family. In terms of tissue distribution, expressed in shoots, leaves, stems, inflorescences, flowers and green siliques.

It catalyses the reaction thiocyanate + S-adenosyl-L-methionine = methyl thiocyanate + S-adenosyl-L-homocysteine. S-adenosyl-L-methionine-dependent methyltransferase. Involved in glucosinolate metabolism and defense against phytopathogens. Highly reactive to thiocyanate (NCS(-)) derived from myrosinase-mediated hydrolysis of glucosinolates upon tissue damage. The polypeptide is Thiocyanate methyltransferase 1 (Arabidopsis thaliana (Mouse-ear cress)).